Reading from the N-terminus, the 321-residue chain is MITRLFENDKQLEGFFSSLDKKKKYLLALSGGSDSLFLMYLLKSRAIFFTAVHVDYGWRETSYQEASDLAALCEQEQIPFILDRPEATDPMDSRDIENAARRYRYELFYRLCKEKCFSGVFLGHHADDQAETILKRVFEGAHLGNLKGMSAQVMYRDVALLRPLLHIPKHKIVEALDSHQVQYVQDITNCNERFLRARMRERLFPYLQDVFGKNIRDPLLSLAGDSAELREYLDQQTAPFLLRVVDNERGKLLPIEQELLKTSFLAKWVCKQFFLNERLVASKSFLQTVYDHLMTGSTARLRLRNRTVLVKARGVIIESIY.

30–35 serves as a coordination point for ATP; it reads SGGSDS.

The protein belongs to the tRNA(Ile)-lysidine synthase family.

Its subcellular location is the cytoplasm. The catalysed reaction is cytidine(34) in tRNA(Ile2) + L-lysine + ATP = lysidine(34) in tRNA(Ile2) + AMP + diphosphate + H(+). Ligates lysine onto the cytidine present at position 34 of the AUA codon-specific tRNA(Ile) that contains the anticodon CAU, in an ATP-dependent manner. Cytidine is converted to lysidine, thus changing the amino acid specificity of the tRNA from methionine to isoleucine. The polypeptide is tRNA(Ile)-lysidine synthase (Chlamydia trachomatis serovar D (strain ATCC VR-885 / DSM 19411 / UW-3/Cx)).